Consider the following 383-residue polypeptide: Cytochrome b (383 aa).

The next 4 membrane-spanning stretches (helical) occupy residues 32 to 52 (FGSL…FLAM), 76 to 98 (WLIR…CHIA), 113 to 133 (TWSI…LGYV), and 179 to 199 (FFSL…AHMI). Residues His-82 and His-96 each coordinate heme b. Positions 183 and 197 each coordinate heme b. His-202 serves as a coordination point for a ubiquinone. Helical transmembrane passes span 225-245 (FIFK…IFVC), 289-309 (LLGV…PLTD), 321-341 (LMKL…WIGA), and 348-368 (YLEV…FIVP).

This sequence belongs to the cytochrome b family. Fungal cytochrome b-c1 complex contains 10 subunits; 3 respiratory subunits, 2 core proteins and 5 low-molecular weight proteins. Cytochrome b-c1 complex is a homodimer. Heme b serves as cofactor.

The protein resides in the mitochondrion inner membrane. In terms of biological role, component of the ubiquinol-cytochrome c reductase complex (complex III or cytochrome b-c1 complex) that is part of the mitochondrial respiratory chain. The b-c1 complex mediates electron transfer from ubiquinol to cytochrome c. Contributes to the generation of a proton gradient across the mitochondrial membrane that is then used for ATP synthesis. This chain is Cytochrome b (cob), found in Schizophyllum commune (Split gill fungus).